The primary structure comprises 426 residues: Protein PHOSPHATE STARVATION RESPONSE 2 (426 aa).

Disordered stretches follow at residues 27 to 81, 96 to 123, and 198 to 247; these read ATLD…PLRS, YTNA…QYGG, and TQPQ…NSKT. The span at 69–81 shows a compositional bias: polar residues; the sequence is FQSSTGSVGPLRS. Low complexity-rich tracts occupy residues 102-119 and 205-225; these read YNSQ…NYGS and AAQS…SSQS. The span at 237–246 shows a compositional bias: polar residues; the sequence is SGASNTSNSK. Residues 243–303 form the HTH myb-type domain; it reads SNSKTRMRWT…HLQKYRTARY (61 aa). The H-T-H motif DNA-binding region spans 274–299; that stretch reads PKGVLKLMKADNLTIYHVKSHLQKYR. 2 disordered regions span residues 302-326 and 382-426; these read RYRP…PSID and DKAV…SGDR. Residues 303–322 are compositionally biased toward basic and acidic residues; the sequence is YRPELSEGSSEKKAASKEDI. 2 stretches are compositionally biased toward polar residues: residues 387-401 and 411-426; these read ASTS…SDLP and ENSQ…SGDR.

As to quaternary structure, interacts (via C-terminus) with SPX4 (via N-terminus) in the presence of inositol polyphosphate. Interacts (via C-terminus) with SPX1 and SPX2 (via SPX domain). Interacts with RLI1 in the nucleus.

It is found in the nucleus. It localises to the cytoplasm. Transcription factor involved in phosphate starvation signaling. Binds to P1BS, an imperfect palindromic sequence 5'-GNATATNC-3', to promote the expression of inorganic phosphate (Pi) starvation-responsive genes. Functionally redundant with PHR1 and PHR3 in regulating Pi starvation response and Pi homeostasis. Involved in both systematic and local Pi-signaling pathways. Regulates several Pi transporters. PHR2 binding to DNA is repressed redundantly by SPX1, SPX2 and SPX4 in a PI-dependent manner. The DNA-binding activity is also repressed by SPX4. Involved in root growth under Pi deprivation. Involved in the modulation of Pi response and homeostasis together with RLI1; promotes RLI1 expression in response to nitrate availability, thus triggering the nitrate-induced phosphate response (NIPR). In Oryza sativa subsp. indica (Rice), this protein is Protein PHOSPHATE STARVATION RESPONSE 2.